Reading from the N-terminus, the 830-residue chain is Serine/threonine-protein kinase pkn2 (830 aa).

At Met-1–Glu-605 the chain is on the cytoplasmic side. The Protein kinase domain maps to Phe-13–Leu-283. Residues Leu-19–Val-27 and Lys-42 each bind ATP. The active-site Proton acceptor is the Asp-135. A disordered region spans residues Val-296–Gly-326. Low complexity predominate over residues Pro-299–Gly-326. The 116-residue stretch at Thr-396–Glu-511 folds into the Guanylate cyclase domain. Residues Ala-606 to Leu-623 traverse the membrane as a helical segment. Residues Ser-624–Asp-830 are Periplasmic-facing.

This sequence belongs to the protein kinase superfamily. Ser/Thr protein kinase family.

The protein resides in the cell membrane. The catalysed reaction is L-seryl-[protein] + ATP = O-phospho-L-seryl-[protein] + ADP + H(+). It catalyses the reaction L-threonyl-[protein] + ATP = O-phospho-L-threonyl-[protein] + ADP + H(+). In terms of biological role, regulates the activity of endogenous beta-lactamase or related enzymes, by blocking their secretion by phosphorylation, in response to an external signal yet to be identified. The polypeptide is Serine/threonine-protein kinase pkn2 (pkn2) (Myxococcus xanthus).